Here is a 354-residue protein sequence, read N- to C-terminus: Variable large protein 15/16 (354 aa).

An N-terminal signal peptide occupies residues 1-18; it reads MRKRISAIIMTLFMVLVS. Cys-19 is lipidated: N-palmitoyl cysteine. Cys-19 is lipidated: S-diacylglycerol cysteine. The interval 333-354 is disordered; that stretch reads EDKSVEATNTAEATTSGQQAKN. A compositionally biased stretch (polar residues) spans 338–354; it reads EATNTAEATTSGQQAKN.

Belongs to the variable large protein (Vlp) family. Delta subfamily.

The protein localises to the cell outer membrane. Functionally, the Vlp and Vsp proteins are antigenically distinct proteins, only one vlp or vsp gene is transcriptionally active at any one time. Switching between these genes is a mechanism of host immune response evasion. The chain is Variable large protein 15/16 from Borrelia hermsii.